The primary structure comprises 164 residues: Cytochrome c-type biogenesis protein CcmE (164 aa).

Residues 1 to 7 (MTRKQRR) lie on the Cytoplasmic side of the membrane. A helical; Signal-anchor for type II membrane protein membrane pass occupies residues 8–28 (LLMIGGAGVVLVVAVGLVLNA). At 29 to 164 (MRGSIVFFST…ASADAAGPSR (136 aa)) the chain is on the periplasmic side. Heme contacts are provided by histidine 122 and tyrosine 126. Over residues 137–149 (KQGHWKDDYEKKP) the composition is skewed to basic and acidic residues. Residues 137 to 164 (KQGHWKDDYEKKPPGAPGASADAAGPSR) are disordered. Residues 153–164 (PGASADAAGPSR) are compositionally biased toward low complexity.

This sequence belongs to the CcmE/CycJ family.

It is found in the cell inner membrane. Heme chaperone required for the biogenesis of c-type cytochromes. Transiently binds heme delivered by CcmC and transfers the heme to apo-cytochromes in a process facilitated by CcmF and CcmH. In Rhodopseudomonas palustris (strain BisB5), this protein is Cytochrome c-type biogenesis protein CcmE.